The chain runs to 349 residues: MELGNFVTDLNGKKCVKCDKDAKFTGVDPKKAWYCQECFVQMVRNKFRSSLSKKKIYKDADARDTLIVFDGTLSGTFLLHQINDALKQITYKRLMVKPTVLVLVSLTEDTEIQMVIKRIQEIKKSVLENVRWVVAHLACSMYDEDFKLKENECNGVEKISDYNQLIASCSVPTYRKELERVLKEKCLQKIACSMGILKCMVPDHADDLGRLAIDQLCLGRGGSISTLVTVTDKRPDFMLIRPLCDISKKELAVYNYLCDIDKHCIHIAQQNNQQKSVQTLTDAFICTLENEKFYSTINTVLSTAAKIHNTSIGKDDSKCSFCNVEVADSVCSTCSAIRECTGDLLTLLF.

It belongs to the CTU2/NCS2 family.

It localises to the cytoplasm. It participates in tRNA modification; 5-methoxycarbonylmethyl-2-thiouridine-tRNA biosynthesis. Functionally, plays a central role in 2-thiolation of mcm(5)S(2)U at tRNA wobble positions of tRNA(Lys), tRNA(Glu) and tRNA(Gln). May act by forming a heterodimer with tut-1/ctu-1 that ligates sulfur from thiocarboxylated urm-1 onto the uridine of tRNAs at wobble position. In Caenorhabditis elegans, this protein is Cytoplasmic tRNA 2-thiolation protein 2.